The sequence spans 200 residues: Rho-related protein racH (200 aa).

11–18 (GDMSVGKT) contacts GTP. An Effector region motif is present at residues 33 to 41 (YVPTVFDNY). GTP-binding positions include 58 to 62 (DTAGS) and 117 to 120 (TKLD). A disordered region spans residues 178-200 (EELAKSKKDSKKGDKDSKDCIIQ). Cys-197 carries the cysteine methyl ester modification. The S-geranylgeranyl cysteine moiety is linked to residue Cys-197. A propeptide spans 198–200 (IIQ) (removed in mature form).

It belongs to the small GTPase superfamily. Rho family.

It localises to the cell membrane. The sequence is that of Rho-related protein racH (racH) from Dictyostelium discoideum (Social amoeba).